The sequence spans 186 residues: Ribosome-recycling factor (186 aa).

It belongs to the RRF family.

The protein localises to the cytoplasm. Responsible for the release of ribosomes from messenger RNA at the termination of protein biosynthesis. May increase the efficiency of translation by recycling ribosomes from one round of translation to another. This is Ribosome-recycling factor from Polaromonas naphthalenivorans (strain CJ2).